The following is a 475-amino-acid chain: Glutamyl-tRNA(Gln) amidotransferase subunit A (475 aa).

Active-site charge relay system residues include lysine 76 and serine 151. Serine 175 (acyl-ester intermediate) is an active-site residue.

It belongs to the amidase family. GatA subfamily. Heterotrimer of A, B and C subunits.

It carries out the reaction L-glutamyl-tRNA(Gln) + L-glutamine + ATP + H2O = L-glutaminyl-tRNA(Gln) + L-glutamate + ADP + phosphate + H(+). Its function is as follows. Allows the formation of correctly charged Gln-tRNA(Gln) through the transamidation of misacylated Glu-tRNA(Gln) in organisms which lack glutaminyl-tRNA synthetase. The reaction takes place in the presence of glutamine and ATP through an activated gamma-phospho-Glu-tRNA(Gln). This is Glutamyl-tRNA(Gln) amidotransferase subunit A from Pelodictyon phaeoclathratiforme (strain DSM 5477 / BU-1).